The chain runs to 395 residues: Putative 8-amino-7-oxononanoate synthase (395 aa).

Arg23 is a binding site for substrate. Position 110–111 (110–111) interacts with pyridoxal 5'-phosphate; it reads GY. Substrate is bound at residue His135. Pyridoxal 5'-phosphate contacts are provided by residues Ser182, 207-210, and 239-242; these read DEAH and TFSK. The residue at position 242 (Lys242) is an N6-(pyridoxal phosphate)lysine. A substrate-binding site is contributed by Thr356.

This sequence belongs to the class-II pyridoxal-phosphate-dependent aminotransferase family. BioF subfamily. Homodimer. Requires pyridoxal 5'-phosphate as cofactor.

It carries out the reaction 6-carboxyhexanoyl-[ACP] + L-alanine + H(+) = (8S)-8-amino-7-oxononanoate + holo-[ACP] + CO2. The protein operates within cofactor biosynthesis; biotin biosynthesis. In terms of biological role, catalyzes the decarboxylative condensation of pimeloyl-[acyl-carrier protein] and L-alanine to produce 8-amino-7-oxononanoate (AON), [acyl-carrier protein], and carbon dioxide. This is Putative 8-amino-7-oxononanoate synthase (bioF) from Bacillus cereus (strain G9842).